The chain runs to 316 residues: Mycothiol acetyltransferase (316 aa).

N-acetyltransferase domains lie at 16–153 and 156–316; these read REVR…VPAV and VRIR…PAAN. 1D-myo-inositol 2-(L-cysteinylamino)-2-deoxy-alpha-D-glucopyranoside is bound at residue glutamate 36. Acetyl-CoA contacts are provided by residues 83 to 85 and 91 to 96; these read LVV and RRGIGS. 3 residues coordinate 1D-myo-inositol 2-(L-cysteinylamino)-2-deoxy-alpha-D-glucopyranoside: glutamate 183, lysine 228, and glutamate 238. Acetyl-CoA contacts are provided by residues 242–244 and 249–255; these read VGV and QGRGLGQ. Tyrosine 283 is a binding site for 1D-myo-inositol 2-(L-cysteinylamino)-2-deoxy-alpha-D-glucopyranoside. 288-293 contacts acetyl-CoA; the sequence is NVAAVR.

This sequence belongs to the acetyltransferase family. MshD subfamily. In terms of assembly, monomer.

The catalysed reaction is 1D-myo-inositol 2-(L-cysteinylamino)-2-deoxy-alpha-D-glucopyranoside + acetyl-CoA = mycothiol + CoA + H(+). In terms of biological role, catalyzes the transfer of acetyl from acetyl-CoA to desacetylmycothiol (Cys-GlcN-Ins) to form mycothiol. This chain is Mycothiol acetyltransferase, found in Mycolicibacterium paratuberculosis (strain ATCC BAA-968 / K-10) (Mycobacterium paratuberculosis).